We begin with the raw amino-acid sequence, 276 residues long: Adenylate kinase (276 aa).

Glycine 50 to threonine 55 contacts ATP. The segment at alanine 70–valine 99 is NMP. AMP contacts are provided by residues threonine 71, arginine 76, glycine 97–valine 99, glycine 126–arginine 129, and glutamine 133. The tract at residues glycine 167 to aspartate 204 is LID. ATP is bound by residues arginine 168 and serine 177–tyrosine 178. AMP is bound by residues arginine 201 and arginine 212. Glutamine 240 serves as a coordination point for ATP.

The protein belongs to the adenylate kinase family. AK2 subfamily. Monomer.

Its subcellular location is the cytoplasm. It localises to the cytosol. The protein localises to the mitochondrion intermembrane space. The enzyme catalyses AMP + ATP = 2 ADP. Functionally, catalyzes the reversible transfer of the terminal phosphate group between ATP and AMP. Plays an important role in cellular energy homeostasis and in adenine nucleotide metabolism. Adenylate kinase activity is critical for regulation of the phosphate utilization and the AMP de novo biosynthesis pathways. In Pyricularia oryzae (strain 70-15 / ATCC MYA-4617 / FGSC 8958) (Rice blast fungus), this protein is Adenylate kinase.